Reading from the N-terminus, the 89-residue chain is Small ribosomal subunit protein uS14A (89 aa).

Belongs to the universal ribosomal protein uS14 family. Part of the 30S ribosomal subunit. Contacts proteins S3 and S10.

Functionally, binds 16S rRNA, required for the assembly of 30S particles and may also be responsible for determining the conformation of the 16S rRNA at the A site. The polypeptide is Small ribosomal subunit protein uS14A (Pediococcus pentosaceus (strain ATCC 25745 / CCUG 21536 / LMG 10740 / 183-1w)).